Reading from the N-terminus, the 469-residue chain is Zinc transporter SLC39A7 (469 aa).

The helical transmembrane segment at 10–30 threads the bilayer; the sequence is WVAVGLLTWATLGLLVAELGG. Basic and acidic residues-rich tracts occupy residues 42–56 and 66–114; these read FHGH…DFHH and HTHE…EHSR. The disordered stretch occupies residues 42 to 121; the sequence is FHGHSHRHSH…HSRGGYGESG (80 aa). A Pros-methylhistidine modification is found at histidine 66. A run of 3 helical transmembrane segments spans residues 138–158, 169–189, and 214–234; these read ALGA…LIPV, LQIL…LHLI, and GPIL…LVVE. The segment covering 242–263 has biased composition (basic residues); that stretch reads GGHGHSHGHGHAHSHTHGSHGH. The segment at 242 to 310 is disordered; the sequence is GGHGHSHGHG…VRPQNAEEEK (69 aa). Over residues 264–285 the composition is skewed to basic and acidic residues; sequence GRQECSTKEKQSSEEEEKETRG. Phosphoserine occurs at positions 275 and 276. The next 3 helical transmembrane spans lie at 386–406, 410–430, and 448–468; these read LTAV…GGAV, IAGG…FIYV, and SLLE…IAHL.

This sequence belongs to the ZIP transporter (TC 2.A.5) family. KE4/Catsup subfamily. As to quaternary structure, homodimer. Methylation at some His residue by METTL9 leads to reduced zinc-binding. Post-translationally, rapidly phosphorylated by CK2 following Zn(2+) treatment. This phosphorylation is required for efficient cytosolic Zn(2+) release.

It is found in the endoplasmic reticulum membrane. It localises to the golgi apparatus. The protein localises to the cis-Golgi network membrane. It catalyses the reaction Zn(2+)(in) = Zn(2+)(out). Transports Zn(2+) from the endoplasmic reticulum (ER)/Golgi apparatus to the cytosol, playing an essential role in the regulation of cytosolic zinc levels. Acts as a gatekeeper of zinc release from intracellular stores, requiring post-translational activation by phosphorylation, resulting in activation of multiple downstream pathways leading to cell growth and proliferation. Has an essential role in B cell development and is required for proper B cell receptor signaling. Plays an important role in maintaining intestinal epithelial homeostasis and skin dermis development by regulating ER function. Controls cell signaling pathways involved in glucose metabolism in skeletal muscle. Has a protective role against ER stress in different biological contexts. Mediates Zn(2+)-induced ferroptosis. In Pongo abelii (Sumatran orangutan), this protein is Zinc transporter SLC39A7.